Consider the following 96-residue polypeptide: Co-chaperonin GroES (96 aa).

The protein belongs to the GroES chaperonin family. Heptamer of 7 subunits arranged in a ring. Interacts with the chaperonin GroEL.

It is found in the cytoplasm. Its function is as follows. Together with the chaperonin GroEL, plays an essential role in assisting protein folding. The GroEL-GroES system forms a nano-cage that allows encapsulation of the non-native substrate proteins and provides a physical environment optimized to promote and accelerate protein folding. GroES binds to the apical surface of the GroEL ring, thereby capping the opening of the GroEL channel. This Nitrosospira multiformis (strain ATCC 25196 / NCIMB 11849 / C 71) protein is Co-chaperonin GroES.